The chain runs to 469 residues: MAEACEPTRPSEDEDEEREPLLPRVAWAQPRRVAPGSAVRMQADEGADVLREPATDEPPAVSGEGSISASLSTELDRTRTTSSETNTFLEDPEFADIVLKAEQAIEIGVFPERISQGSSGSYFVKDSKRNIIGVFKPKSEEPYGQLNPKWTKYVHKVCCPCCFGRGCLLPNQGYLSEAGAYLVDVKLNLGIVPKTKVVWLVSETFNYSAIDRAKSRGKKYALEKVPKVGRKFHRIGLPPKVGSFQLFVKDYKEAEYWLRRFEAEPLPENIRKQFQSQFEKLVILDYIIRNTDRGNDNWLVKYDEMKYAKKIESEESNWIDNKQLLIKIAAIDNGLAFPFKHPDEWRAYPFHWAWLPQAKVPFSEETRNLILPYISDMNFVQDLCEDLYELFKTDKGFDRAAFENQMSVMRGQILNLTQALRDGKSPMQLAQMPCVIVECSKSGSQGRVVHLGSSFTQTVHCRKPFFSSW.

Residues methionine 1–glutamate 84 form a disordered region. Serine 37 carries the post-translational modification Phosphoserine. The 332-residue stretch at glycine 108–cysteine 439 folds into the PI3K/PI4K catalytic domain. The segment at isoleucine 114–glycine 120 is G-loop. ATP is bound by residues serine 121 and lysine 136. An important for substrate binding region spans residues glutamate 141–tyrosine 143. Positions lysine 149–cysteine 162 are important for interaction with membranes. ATP contacts are provided by residues glutamine 245–valine 248 and arginine 259–arginine 260. The important for interaction with membranes stretch occupies residues lysine 252–arginine 260. Positions arginine 289 to asparagine 297 are catalytic loop. An activation loop region spans residues alanine 330–phenylalanine 350. Position 332 (aspartate 332) interacts with ATP. Residues tryptophan 345–tryptophan 354 form an important for interaction with membranes region.

Belongs to the PI3/PI4-kinase family. Type II PI4K subfamily.

The protein localises to the cytoplasm. The protein resides in the cytosol. It is found in the golgi apparatus membrane. Its subcellular location is the endoplasmic reticulum membrane. It localises to the cell membrane. The protein localises to the early endosome membrane. The enzyme catalyses a 1,2-diacyl-sn-glycero-3-phospho-(1D-myo-inositol) + ATP = a 1,2-diacyl-sn-glycero-3-phospho-(1D-myo-inositol 4-phosphate) + ADP + H(+). In terms of biological role, together with PI4K2A and the type III PI4Ks (PIK4CA and PIK4CB) it contributes to the overall PI4-kinase activity of the cell. This contribution may be especially significant in plasma membrane, endosomal and Golgi compartments. The phosphorylation of phosphatidylinositol (PI) to PI4P is the first committed step in the generation of phosphatidylinositol 4,5-bisphosphate (PIP2), a precursor of the second messenger inositol 1,4,5-trisphosphate (InsP3). Contributes to the production of InsP3 in stimulated cells and is likely to be involved in the regulation of vesicular trafficking. This chain is Phosphatidylinositol 4-kinase type 2-beta (Pi4k2b), found in Mus musculus (Mouse).